The chain runs to 366 residues: MSEEEQGSGTTTGCGLPSIEQMLAANPGKTPISLLQEYGTRIGKTPVYDLLKAEGQAHQPNFTFRVTVGDTSCTGQGPSKKAAKHKAAEVALKHLKGGSMLEPALEDSSSFSPLDSSLPEDIPVFTAAAAATPVPSVVLTRSPPMELQPPVSPQQSECNPVGALQELVVQKGWRLPEYTVTQESGPAHRKEFTMTCRVERFIEIGSGTSKKLAKRNAAAKMLLRVHTVPLDARDGNEVEPDDDHFSIGVGSRLDGLRNRGPGCTWDSLRNSVGEKILSLRSCSLGSLGALGPACCRVLSELSEEQAFHVSYLDIEELSLSGLCQCLVELSTQPATVCHGSATTREAARGEAARRALQYLKIMAGSK.

3 sufficient for interaction with PRKRA regions span residues 22–105 (MLAA…EPAL), 152–234 (SPQQ…DARD), and 287–366 (LGAL…AGSK). The DRBM 1 domain occupies 30–97 (TPISLLQEYG…AEVALKHLKG (68 aa)). S152 carries the phosphoserine modification. DRBM domains are found at residues 159 to 227 (NPVG…RVHT) and 293 to 361 (ACCR…YLKI). The interval 228–366 (VPLDARDGNE…QYLKIMAGSK (139 aa)) is sufficient for interaction with DICER1.

This sequence belongs to the TARBP2 family. In terms of assembly, self-associates. Component of the RISC loading complex (RLC), or micro-RNA (miRNA) loading complex (miRLC), which is composed of DICER1, AGO2 and TARBP2. Note that the trimeric RLC/miRLC is also referred to as RISC. Interacts with EIF2AK2/PKR and inhibits its protein kinase activity. Interacts with DHX9 and PRKRA. Interacts with DICER1, AGO2, MOV10, EIF6 and RPL7A (60S ribosome subunit); they form a large RNA-induced silencing complex (RISC). Interacts with IRF7; this interaction prevents IRF7 phosphorylation and activation. As to quaternary structure, (Microbial infection) Interacts with FTSJ3; forms a complex with FTSJ3 and HIV-1 TAR RNA. (Microbial infection) Interacts with ebolavirus VP30; this interaction, which occurs only in the presence of siRNA, prevents TARBP2 binding to DICER1 and thus allows the virus to counteract host RNA silencing. In terms of assembly, (Microbial infection) Interacts with ebolavirus VP35; this interaction prevents TARBP2 binding to DICER1 and thus allows the virus to counteract host RNA silencing.

It is found in the cytoplasm. The protein localises to the perinuclear region. The protein resides in the nucleus. Functionally, required for formation of the RNA induced silencing complex (RISC). Component of the RISC loading complex (RLC), also known as the micro-RNA (miRNA) loading complex (miRLC), which is composed of DICER1, AGO2 and TARBP2. Within the RLC/miRLC, DICER1 and TARBP2 are required to process precursor miRNAs (pre-miRNAs) to mature miRNAs and then load them onto AGO2. AGO2 bound to the mature miRNA constitutes the minimal RISC and may subsequently dissociate from DICER1 and TARBP2. May also play a role in the production of short interfering RNAs (siRNAs) from double-stranded RNA (dsRNA) by DICER1. Binds in vitro to the PRM1 3'-UTR. Seems to act as a repressor of translation. For some pre-miRNA substrates, may also alter the choice of cleavage site by DICER1. Negatively regulates IRF7-mediated IFN-beta signaling triggered by viral infection by inhibiting the phosphorylation of IRF7 and promoting its 'Lys'-48-linked ubiquitination and degradation. In terms of biological role, (Microbial infection) Binds to the HIV-1 TAR RNA which is located in the long terminal repeat (LTR) of HIV-1, and stimulates translation of TAR-containing RNAs. This is achieved in part at least by binding to and inhibiting EIF2AK2/PKR, thereby reducing phosphorylation and inhibition of EIF2S1/eIF-2-alpha. May also promote translation of TAR-containing RNAs independently of EIF2AK2/PKR. Mediates recruitment of FTSJ3 methyltransferase to HIV-1 RNA, leading to 2'-O-methylation of the viral genome, allowing HIV-1 to escape the innate immune system. This is RISC-loading complex subunit TARBP2 from Homo sapiens (Human).